The sequence spans 469 residues: 3-isopropylmalate dehydratase large subunit (469 aa).

Positions 348, 409, and 412 each coordinate [4Fe-4S] cluster.

The protein belongs to the aconitase/IPM isomerase family. LeuC type 1 subfamily. As to quaternary structure, heterodimer of LeuC and LeuD. [4Fe-4S] cluster is required as a cofactor.

It catalyses the reaction (2R,3S)-3-isopropylmalate = (2S)-2-isopropylmalate. It functions in the pathway amino-acid biosynthesis; L-leucine biosynthesis; L-leucine from 3-methyl-2-oxobutanoate: step 2/4. Catalyzes the isomerization between 2-isopropylmalate and 3-isopropylmalate, via the formation of 2-isopropylmaleate. This is 3-isopropylmalate dehydratase large subunit from Nitrosococcus oceani (strain ATCC 19707 / BCRC 17464 / JCM 30415 / NCIMB 11848 / C-107).